Consider the following 211-residue polypeptide: Thiamine-phosphate synthase (211 aa).

4-amino-2-methyl-5-(diphosphooxymethyl)pyrimidine-binding positions include 39 to 41 (QLR) and Asn71. Positions 72 and 91 each coordinate Mg(2+). Ser110 is a 4-amino-2-methyl-5-(diphosphooxymethyl)pyrimidine binding site. 136 to 138 (TGT) is a binding site for 2-[(2R,5Z)-2-carboxy-4-methylthiazol-5(2H)-ylidene]ethyl phosphate. Lys139 provides a ligand contact to 4-amino-2-methyl-5-(diphosphooxymethyl)pyrimidine. Residues Gly167 and 187–188 (VS) each bind 2-[(2R,5Z)-2-carboxy-4-methylthiazol-5(2H)-ylidene]ethyl phosphate.

Belongs to the thiamine-phosphate synthase family. It depends on Mg(2+) as a cofactor.

The catalysed reaction is 2-[(2R,5Z)-2-carboxy-4-methylthiazol-5(2H)-ylidene]ethyl phosphate + 4-amino-2-methyl-5-(diphosphooxymethyl)pyrimidine + 2 H(+) = thiamine phosphate + CO2 + diphosphate. The enzyme catalyses 2-(2-carboxy-4-methylthiazol-5-yl)ethyl phosphate + 4-amino-2-methyl-5-(diphosphooxymethyl)pyrimidine + 2 H(+) = thiamine phosphate + CO2 + diphosphate. It carries out the reaction 4-methyl-5-(2-phosphooxyethyl)-thiazole + 4-amino-2-methyl-5-(diphosphooxymethyl)pyrimidine + H(+) = thiamine phosphate + diphosphate. The protein operates within cofactor biosynthesis; thiamine diphosphate biosynthesis; thiamine phosphate from 4-amino-2-methyl-5-diphosphomethylpyrimidine and 4-methyl-5-(2-phosphoethyl)-thiazole: step 1/1. Functionally, condenses 4-methyl-5-(beta-hydroxyethyl)thiazole monophosphate (THZ-P) and 2-methyl-4-amino-5-hydroxymethyl pyrimidine pyrophosphate (HMP-PP) to form thiamine monophosphate (TMP). This chain is Thiamine-phosphate synthase, found in Xanthobacter autotrophicus (strain ATCC BAA-1158 / Py2).